Here is a 76-residue protein sequence, read N- to C-terminus: Beta-defensin 121 (76 aa).

Positions 1–15 (MKLLLLLLTVTLLLA) are cleaved as a signal peptide. Cystine bridges form between Cys-23-Cys-50, Cys-30-Cys-44, and Cys-34-Cys-51.

It belongs to the beta-defensin family. Abundant expression in the male reproductive tract only.

Its subcellular location is the secreted. Has antibacterial activity. This is Beta-defensin 121 (DEFB121) from Homo sapiens (Human).